The primary structure comprises 209 residues: Thymidylate kinase (209 aa).

10 to 17 provides a ligand contact to ATP; that stretch reads GLDGAGKS.

The protein belongs to the thymidylate kinase family.

The enzyme catalyses dTMP + ATP = dTDP + ADP. In terms of biological role, phosphorylation of dTMP to form dTDP in both de novo and salvage pathways of dTTP synthesis. The chain is Thymidylate kinase from Francisella tularensis subsp. holarctica (strain FTNF002-00 / FTA).